We begin with the raw amino-acid sequence, 511 residues long: MLLYTKELVIPRPRPGLLRFRNNPRGIKFREKLCNSFAHSNIHGMQHVFGEQHLWQRCLWLAIVLGAVITGFSLYTVLMHRHSEQLLVSLIETTQLPVYHIDFPAVAVCPWNHFNWQRAPSAFIRFLPRHPNAELRETFRQLLASMDIMNFSNFNRIRILTKRNLTGISYLKMTDLMNFMTYRCDELFVADSCVFDETPYDCCKLFVREQTVKGQCLVFNSMISENSRKKHLINQFYPHKLSTAGEDSGLKFTINASYSFMNNIDALTPFGMNLMIKEPRQWSNEMMYHLYPDTENFVAVHPLVTETSPNTYEMSPKKRRCYFDDEKNPTFQNTSLTYNRENCLVVCLHLVVWKTCQCSLPAFLPPIDGVPECGINDAQCLGNNSDIFTYVKMGDQEKYINDSRQGHFCDCPDNCNSRLYEMSLNVRKLDYPKNSTDQLIKAQVYYGQRVMTKIITKLKYTNIDLLANFGGIISLYIGASVMSFIELLFVLGKLMWGFIRDARIKLKEYTK.

Helical transmembrane passes span 59 to 79 and 471 to 491; these read LWLA…TVLM and GIIS…LFVL.

This sequence belongs to the amiloride-sensitive sodium channel (TC 1.A.6) family. Expressed in the tracheal system. Expressed in the taste-sensing terminal organ of the larval head. In adults, expressed in hairs on the tibia, femur and wing margin, but not in hairs on the tarsi of the leg.

It is found in the membrane. Its function is as follows. Part of a complex that plays a role in tracheal liquid clearance. In both larvae and adults, contributes to the behavioral response to salt. Probable role in sodium transport. The protein is Pickpocket protein 19 (ppk19) of Drosophila melanogaster (Fruit fly).